Consider the following 200-residue polypeptide: Pyrrolidone-carboxylate peptidase (200 aa).

Active-site residues include Glu78, Cys141, and His165.

It belongs to the peptidase C15 family. Homotetramer.

The protein localises to the cytoplasm. It catalyses the reaction Release of an N-terminal pyroglutamyl group from a polypeptide, the second amino acid generally not being Pro.. Removes 5-oxoproline from various penultimate amino acid residues except L-proline. This Lactobacillus acidophilus (strain ATCC 700396 / NCK56 / N2 / NCFM) protein is Pyrrolidone-carboxylate peptidase.